The primary structure comprises 198 residues: Angiopoietin-like protein 8 (198 aa).

The first 21 residues, 1–21, serve as a signal peptide directing secretion; the sequence is MPVPALCLLWALAMVTRPASA.

Belongs to the ANGPTL8 family. As to quaternary structure, interacts with ANGPTL3. In terms of processing, proteolytically cleaved at the N-terminus. As to expression, predominantly expressed in liver. Also expressed in adipose tissues.

Its subcellular location is the secreted. Functionally, hormone that acts as a blood lipid regulator by regulating serum triglyceride levels. May be involved in the metabolic transition between fasting and refeeding: required to direct fatty acids to adipose tissue for storage in the fed state. This Homo sapiens (Human) protein is Angiopoietin-like protein 8.